We begin with the raw amino-acid sequence, 247 residues long: tRNA pseudouridine synthase A (247 aa).

The active-site Nucleophile is the aspartate 53. Tyrosine 111 provides a ligand contact to substrate.

Belongs to the tRNA pseudouridine synthase TruA family. In terms of assembly, homodimer.

The catalysed reaction is uridine(38/39/40) in tRNA = pseudouridine(38/39/40) in tRNA. In terms of biological role, formation of pseudouridine at positions 38, 39 and 40 in the anticodon stem and loop of transfer RNAs. The polypeptide is tRNA pseudouridine synthase A (Bacillus licheniformis (strain ATCC 14580 / DSM 13 / JCM 2505 / CCUG 7422 / NBRC 12200 / NCIMB 9375 / NCTC 10341 / NRRL NRS-1264 / Gibson 46)).